We begin with the raw amino-acid sequence, 164 residues long: Transcription elongation factor GreA (164 aa).

Positions 50–76 form a coiled coil; sequence YHAAREEQGQQEARIRQLQDLLSNAKV.

This sequence belongs to the GreA/GreB family.

Functionally, necessary for efficient RNA polymerase transcription elongation past template-encoded arresting sites. The arresting sites in DNA have the property of trapping a certain fraction of elongating RNA polymerases that pass through, resulting in locked ternary complexes. Cleavage of the nascent transcript by cleavage factors such as GreA or GreB allows the resumption of elongation from the new 3'terminus. GreA releases sequences of 2 to 3 nucleotides. In Mycobacterium bovis (strain ATCC BAA-935 / AF2122/97), this protein is Transcription elongation factor GreA.